The primary structure comprises 155 residues: Troponin C, body wall muscle (155 aa).

N-acetylvaline is present on valine 1. 4 consecutive EF-hand domains span residues 7–43 (DEKSQFRAAFDIFVADAKDGTISSKELGKVMKMLGQN), 44–79 (PTEKDLQEMIEEVDIDGSGTIDFEEFCLMMYRQMQA), 88–121 (REEKELSEAFRLFDLDGDGIGDELKAALDGTGEN), and 122–155 (VETWEVDEMMADGDKNHDSQIDYEEWVTMMKFVQ). Residues aspartate 57, aspartate 59, serine 61, threonine 63, and glutamate 68 each coordinate Ca(2+). Ca(2+) contacts are provided by aspartate 135, asparagine 137, aspartate 139, glutamine 141, and glutamate 146.

This sequence belongs to the troponin C family.

In terms of biological role, troponin is the central regulatory protein of muscle contraction. Tn consists of three components: Tn-I which is the inhibitor of actomyosin ATPase, Tn-T which contains the binding site for tropomyosin and Tn-C. The binding of calcium to Tn-C abolishes the inhibitory action of Tn on actin filaments. This Halocynthia roretzi (Sea squirt) protein is Troponin C, body wall muscle.